The following is a 217-amino-acid chain: UPF0323 lipoprotein HPSH_01205 (217 aa).

Positions 1 to 27 (MKKPYRKISDYAIVGGLSALVMVSIVG) are cleaved as a signal peptide. Residue Cys28 is the site of N-palmitoyl cysteine attachment. Residue Cys28 is the site of S-diacylglycerol cysteine attachment. Residues 160–171 (QRTYKSPQAYQR) are compositionally biased toward polar residues. Residues 160 to 217 (QRTYKSPQAYQRSQNSFSKSAPSASSMGGASKGQSGFFGSSRPTSSPAVSSGTRGFNS) form a disordered region. Positions 172 to 210 (SQNSFSKSAPSASSMGGASKGQSGFFGSSRPTSSPAVSS) are enriched in low complexity.

Belongs to the UPF0323 family.

It localises to the cell membrane. This is UPF0323 lipoprotein HPSH_01205 from Helicobacter pylori (strain Shi470).